The primary structure comprises 727 residues: Glucans biosynthesis glucosyltransferase H (727 aa).

A disordered region spans residues 18–38; sequence SAMPNERPGAMEPQNLSKMPE. Helical transmembrane passes span 58 to 78, 97 to 117, 278 to 298, 408 to 428, 460 to 480, 496 to 516, and 572 to 592; these read FLVV…MGAV, VNFC…LILL, LQQF…GWWV, IMAY…LMLA, LFYI…LLLL, IFSV…MMFI, and LLAW…ISAW.

It belongs to the glycosyltransferase 2 family. OpgH subfamily.

Its subcellular location is the cell inner membrane. The protein operates within glycan metabolism; osmoregulated periplasmic glucan (OPG) biosynthesis. In terms of biological role, involved in the biosynthesis of osmoregulated periplasmic glucans (OPGs). This Shewanella baltica (strain OS223) protein is Glucans biosynthesis glucosyltransferase H.